A 257-amino-acid polypeptide reads, in one-letter code: NAD-capped RNA hydrolase NudC (257 aa).

Substrate is bound by residues Lys25 and Arg69. Residues Cys98 and Cys101 each coordinate Zn(2+). Glu111 serves as a coordination point for substrate. Positions 116 and 119 each coordinate Zn(2+). Tyr124 serves as a coordination point for substrate. The Nudix hydrolase domain occupies 125–248 (PQIAPCIIVA…TVARRLIEDT (124 aa)). A divalent metal cation is bound by residues Ala158, Glu174, and Glu178. The Nudix box signature appears at 159–180 (GFVEVGETLEQAVAREVMEESG). 192 to 199 (QPWPFPQS) lines the substrate pocket. A divalent metal cation is bound at residue Glu219. Substrate is bound at residue Ala241.

This sequence belongs to the Nudix hydrolase family. NudC subfamily. Homodimer. Mg(2+) serves as cofactor. The cofactor is Mn(2+). It depends on Zn(2+) as a cofactor.

It carries out the reaction a 5'-end NAD(+)-phospho-ribonucleoside in mRNA + H2O = a 5'-end phospho-adenosine-phospho-ribonucleoside in mRNA + beta-nicotinamide D-ribonucleotide + 2 H(+). The catalysed reaction is NAD(+) + H2O = beta-nicotinamide D-ribonucleotide + AMP + 2 H(+). It catalyses the reaction NADH + H2O = reduced beta-nicotinamide D-ribonucleotide + AMP + 2 H(+). MRNA decapping enzyme that specifically removes the nicotinamide adenine dinucleotide (NAD) cap from a subset of mRNAs by hydrolyzing the diphosphate linkage to produce nicotinamide mononucleotide (NMN) and 5' monophosphate mRNA. The NAD-cap is present at the 5'-end of some mRNAs and stabilizes RNA against 5'-processing. Has preference for mRNAs with a 5'-end purine. Catalyzes the hydrolysis of a broad range of dinucleotide pyrophosphates. This Shigella flexneri protein is NAD-capped RNA hydrolase NudC.